The following is a 39-amino-acid chain: uncharacterized protein (39 aa).

Residues 1-16 show a composition bias toward polar residues; the sequence is MLNIQPTQSIVNNQPK. The disordered stretch occupies residues 1–39; it reads MLNIQPTQSIVNNQPKSDQKKQKPADLLKEFYDKTGNRN. Positions 17-39 are enriched in basic and acidic residues; sequence SDQKKQKPADLLKEFYDKTGNRN.

This is an uncharacterized protein from Dictyostelium discoideum (Social amoeba).